A 542-amino-acid polypeptide reads, in one-letter code: Chaperonin GroEL (542 aa).

ATP is bound by residues 29–32, 86–90, G413, 476–478, and D492; these read TLGP, DGTTT, and NAA. The disordered stretch occupies residues 522-542; it reads PDENGPAAVPDMGMGGMGGMM.

It belongs to the chaperonin (HSP60) family. In terms of assembly, forms a cylinder of 14 subunits composed of two heptameric rings stacked back-to-back. Interacts with the co-chaperonin GroES.

The protein resides in the cytoplasm. The catalysed reaction is ATP + H2O + a folded polypeptide = ADP + phosphate + an unfolded polypeptide.. Its function is as follows. Together with its co-chaperonin GroES, plays an essential role in assisting protein folding. The GroEL-GroES system forms a nano-cage that allows encapsulation of the non-native substrate proteins and provides a physical environment optimized to promote and accelerate protein folding. The protein is Chaperonin GroEL of Listeria monocytogenes serotype 4a (strain HCC23).